We begin with the raw amino-acid sequence, 133 residues long: Fatty acid-binding protein homolog 1 (133 aa).

N-acetylmethionine is present on Met1. Residues Arg107 and 127 to 129 (RTY) each bind hexadecanoate.

Belongs to the calycin superfamily. Fatty-acid binding protein (FABP) family.

Functionally, has been implicated in the acquisition, storage, and transport of lipids, and may be important to the organism since it is incapable of synthesizing most of its lipids de novo. This Echinococcus granulosus (Hydatid tapeworm) protein is Fatty acid-binding protein homolog 1 (FABP1).